Reading from the N-terminus, the 147-residue chain is Cyanate hydratase (147 aa).

Residues arginine 88, glutamate 91, and serine 114 contribute to the active site.

Belongs to the cyanase family.

It catalyses the reaction cyanate + hydrogencarbonate + 3 H(+) = NH4(+) + 2 CO2. Catalyzes the reaction of cyanate with bicarbonate to produce ammonia and carbon dioxide. This is Cyanate hydratase from Cupriavidus necator (strain ATCC 17699 / DSM 428 / KCTC 22496 / NCIMB 10442 / H16 / Stanier 337) (Ralstonia eutropha).